The following is a 516-amino-acid chain: Potassium voltage-gated channel subfamily A member 10 (516 aa).

Residues 223 to 244 (VALVSVLVIVISIIIFCMETLP) form a helical membrane-spanning segment. An N-linked (GlcNAc...) asparagine glycan is attached at Asn-261. Residues 276–296 (FFVIETACIIWFSFELFVRFI) traverse the membrane as a helical segment. A helical transmembrane segment spans residues 308-328 (IMNIIDIVSIIPYFVTLTTEL). Asn-339 carries an N-linked (GlcNAc...) asparagine glycan. A helical; Voltage-sensor transmembrane segment spans residues 344–363 (ILRIIRLVRVFRIFKLSRHS). The helical transmembrane segment at 380 to 400 (LGLLIFFLFIGVILFSSAVYF) threads the bilayer. The short motif at 426–431 (TVGYGD) is the Selectivity filter element. The helical transmembrane segment at 441–461 (IVGTLCAIAGVLTIALPVPVI) threads the bilayer. An N-linked (GlcNAc...) asparagine glycan is attached at Asn-503.

It belongs to the potassium channel family. A (Shaker) (TC 1.A.1.2) subfamily. Kv1.8/KCNA10 sub-subfamily. In terms of assembly, homotetramer. In terms of tissue distribution, detected in brain, cochlear sensory epithelium, cochlear ganglion, tegumentum vasculosum. Detected at low levels in cochlear lagena.

The protein localises to the membrane. It catalyses the reaction K(+)(in) = K(+)(out). The channel activity is up-regulated by cAMP. Functionally, voltage-gated potassium ion channel that mediates K(+) permeability of excitable membranes. When opened in response to the voltage difference across the membrane, KCNA10 channel selectively allows the flow of potassium ions across the membrane down their electrochemical gradient. This Gallus gallus (Chicken) protein is Potassium voltage-gated channel subfamily A member 10 (KCNA10).